The primary structure comprises 595 residues: MKERSILRTLFLWRLINALSIRSFFQADEYWQSLEPAHVKAFGYGGLTWEWQHGLRSYAFPMLFEMSYYVAWILGVATRMALQGLAHATALCGAVVPSGAAGVAAMKAVWELPEAAQELVEYYGVLYGPRVVMAAVAACGEFYSVLLVRKLYLRVADKGDDQKGDAAPVSRLALMLTMTNFFNCFFATRTFINSFEMTLTAVALYHWDWSGGLDVGSLGFSASLAVAAFACLQRPTNVLIWAVLGLFLVLNLVRSRRWQLLLTLVAKVAAAGALAVCANIAIDYYFYGGVLLPLLRFIEFNVTTPLAAFYGRAPWHFHLLQSVPLIVGYALPFFVGALLTHNFRRGNAGLLGSPIMQIKCVVVLNIALYSCIDHKEFRFLYPLQPLFLSLSALEMHTWLQHHHARGTAWLKRVQSLLYVLPVLSITAALVLNTAHEAGVVSVMDYLHSAVPSAESIGFIMPCHSTPWQSHLHRNDLGKLWAISCQPPLDLLHQEDAGDQLLTYMDESDHLYENIPEFIHKNFPPVFRRDLRSPGRQYAYEWPEFLVVFEHMDEAFMKEYLKDSNYVEVKRFFNTLSHWDSRRAGDVIVYHKSPWY.

Transmembrane regions (helical) follow at residues 58-78, 85-105, 128-148, 185-207, 212-232, 235-255, 260-280, 289-309, 319-339, and 413-433; these read YAFP…GVAT, LAHA…GVAA, GPRV…VLLV, FFAT…LYHW, GLDV…FACL, PTNV…LVRS, LLLT…CANI, GVLL…LAAF, LLQS…GALL, and VQSL…VLNT.

It belongs to the glycosyltransferase 22 family. PIGB subfamily.

Its subcellular location is the endoplasmic reticulum membrane. Its pathway is glycolipid biosynthesis; glycosylphosphatidylinositol-anchor biosynthesis. Functionally, mannosyltransferase involved in glycosylphosphatidylinositol-anchor biosynthesis. Transfers the third mannose to Man2-GlcN-acyl-PI during GPI precursor assembly. The protein is GPI mannosyltransferase 3 (GPI10) of Eremothecium gossypii (strain ATCC 10895 / CBS 109.51 / FGSC 9923 / NRRL Y-1056) (Yeast).